The sequence spans 717 residues: ATP-dependent zinc metalloprotease FtsH (717 aa).

Topologically, residues 1–9 (MKNASRIFK) are cytoplasmic. Residues 10–30 (GPLIWILLCIGLIIVFLQFAG) traverse the membrane as a helical segment. Topologically, residues 31-111 (SGNGYKDIPT…SWQGENPGQS (81 aa)) are extracellular. The chain crosses the membrane as a helical span at residues 112 to 132 (IWKALLINFLPFVIILLFFLW). Residues 133 to 717 (AMNAAQGMGG…NGNPWGPPRS (585 aa)) are Cytoplasmic-facing. An ATP-binding site is contributed by 207–214 (GPPGTGKT). Residue histidine 429 participates in Zn(2+) binding. The active site involves glutamate 430. Histidine 433 and aspartate 505 together coordinate Zn(2+). Positions 617–717 (AFTGSDKRVP…NGNPWGPPRS (101 aa)) are disordered. A compositionally biased stretch (pro residues) spans 691 to 717 (PEPPSPTHPGEGPQPPSNGNPWGPPRS).

This sequence in the central section; belongs to the AAA ATPase family. In the C-terminal section; belongs to the peptidase M41 family. Homohexamer. The cofactor is Zn(2+).

The protein localises to the cell membrane. Acts as a processive, ATP-dependent zinc metallopeptidase for both cytoplasmic and membrane proteins. Plays a role in the quality control of integral membrane proteins. The chain is ATP-dependent zinc metalloprotease FtsH from Cutibacterium acnes (strain SK137) (Propionibacterium acnes).